We begin with the raw amino-acid sequence, 1862 residues long: Protein RRP5 homolog (1862 aa).

The disordered stretch occupies residues 1–56 (MANLEESFPRGGTRKLHKSEKSSQQVVEQDNLFDVSTEEGPIKRKKSQKGPAKTKK). Position 2 is an N-acetylalanine (alanine 2). The residue at position 7 (serine 7) is a Phosphoserine. Positions 43 to 56 (KRKKSQKGPAKTKK) are enriched in basic residues. 4 S1 motif domains span residues 83–171 (GMRI…LSVN), 187–258 (GMLL…LSVE), 281–346 (GLLV…LSLR), and 365–436 (GAVL…LSLR). Position 438 is a phosphoserine (serine 438). 5 consecutive S1 motif domains span residues 453–522 (GTVV…MTLK), 542–611 (GLQT…LSFR), 636–707 (GQLV…LCRK), 729–798 (GMLL…LSLR), and 846–911 (GMVL…VSLH). Residues 999–1036 (SKRTRMPVQRDSETVDDKGEEKEEEEEEEEKEEENLTV) are disordered. Residues 1006-1019 (VQRDSETVDDKGEE) show a composition bias toward basic and acidic residues. Acidic residues predominate over residues 1020–1033 (KEEEEEEEEKEEEN). S1 motif domains are found at residues 1047 to 1120 (GDKV…ISHP), 1160 to 1233 (GQTV…LSLI), 1241 to 1309 (GEVA…LSLR), and 1335 to 1407 (GQLL…LSLL). 2 disordered regions span residues 1406 to 1520 (LLPS…STEV) and 1545 to 1577 (REES…KAEK). Basic and acidic residues-rich tracts occupy residues 1423–1437 (PKQE…EGQK) and 1445–1454 (RREEKEEPQK). Residue lysine 1424 forms a Glycyl lysine isopeptide (Lys-Gly) (interchain with G-Cter in SUMO2) linkage. Phosphoserine is present on residues serine 1468 and serine 1490. Basic and acidic residues predominate over residues 1566–1577 (KERELEKQKAEK). HAT repeat units follow at residues 1590–1622 (GRQP…FHLQ), 1696–1728 (EKYK…FVLG), 1766–1798 (GDVE…MTIK), and 1800–1835 (GSQT…YEKQ).

In terms of assembly, interacts with NF-kappa-B p50/NFKB1 and NF-kappa-B p65/RELA. Ubiquitous.

Its subcellular location is the nucleus. It is found in the nucleolus. Essential for the generation of mature 18S rRNA, specifically necessary for cleavages at sites A0, 1 and 2 of the 47S precursor. Directly interacts with U3 snoRNA. This Mus musculus (Mouse) protein is Protein RRP5 homolog (Pdcd11).